An 842-amino-acid chain; its full sequence is Protein translocase subunit SecA (842 aa).

Residues glutamine 85, 103–107 (GEGKT), and aspartate 493 each bind ATP. 4 residues coordinate Zn(2+): cysteine 825, cysteine 827, cysteine 836, and histidine 837.

This sequence belongs to the SecA family. In terms of assembly, monomer and homodimer. Part of the essential Sec protein translocation apparatus which comprises SecA, SecYEG and auxiliary proteins SecDF. Other proteins may also be involved. Zn(2+) is required as a cofactor.

The protein localises to the cell membrane. It is found in the cytoplasm. It catalyses the reaction ATP + H2O + cellular proteinSide 1 = ADP + phosphate + cellular proteinSide 2.. Its function is as follows. Part of the Sec protein translocase complex. Interacts with the SecYEG preprotein conducting channel. Has a central role in coupling the hydrolysis of ATP to the transfer of proteins into and across the cell membrane, serving as an ATP-driven molecular motor driving the stepwise translocation of polypeptide chains across the membrane. The protein is Protein translocase subunit SecA of Streptococcus equi subsp. equi (strain 4047).